A 182-amino-acid chain; its full sequence is Adenine phosphoribosyltransferase (182 aa).

This sequence belongs to the purine/pyrimidine phosphoribosyltransferase family. Homodimer.

It is found in the cytoplasm. The catalysed reaction is AMP + diphosphate = 5-phospho-alpha-D-ribose 1-diphosphate + adenine. It functions in the pathway purine metabolism; AMP biosynthesis via salvage pathway; AMP from adenine: step 1/1. Catalyzes a salvage reaction resulting in the formation of AMP, that is energically less costly than de novo synthesis. This Pseudomonas syringae pv. tomato (strain ATCC BAA-871 / DC3000) protein is Adenine phosphoribosyltransferase.